The sequence spans 201 residues: Recombination protein RecR (201 aa).

The C4-type zinc-finger motif lies at 60–75; sequence CKKCFNLTSEDECEIC. The Toprim domain maps to 83 to 177; sequence KLICVVAETK…KVTRIAYGLP (95 aa).

It belongs to the RecR family.

May play a role in DNA repair. It seems to be involved in an RecBC-independent recombinational process of DNA repair. It may act with RecF and RecO. The protein is Recombination protein RecR of Prochlorococcus marinus (strain MIT 9215).